The primary structure comprises 363 residues: MKRIVLLLMSVALFSTAAQAARIKDVAQVAGVRSNQLVGYGLVSGLPGTGEANPFTEQSFAAMLQNFGIQLPPGTKPKIKNVAAVMVTAELPPFSKPGQQVDVTVSSIGSAKSLRGGTLLQTFLKGLDGQVYAVAQGNLVVSGFSAEGADGSKIVGNNPTVGLISSGATVEREIPNPFGRGDYITFNLLESDFTTAQRMADAVNNFLGPQMASAVDATSVRVRAPRDVSQRVAFLSAIENLEFDPADGAAKIIVNSRTGTIVVGKHVRLKPAAVTHGGMTVAIKENLNVSQPNSFSGGQTVVVPDSDIEVTEEKGKMFKFEPGLTLDDLVRAVNEVGAAPSDLMAILQALKQAGAIEGQLIII.

The signal sequence occupies residues 1 to 20 (MKRIVLLLMSVALFSTAAQA).

Belongs to the FlgI family. As to quaternary structure, the basal body constitutes a major portion of the flagellar organelle and consists of four rings (L,P,S, and M) mounted on a central rod.

The protein resides in the periplasm. It is found in the bacterial flagellum basal body. In terms of biological role, assembles around the rod to form the L-ring and probably protects the motor/basal body from shearing forces during rotation. This Vibrio parahaemolyticus serotype O3:K6 (strain RIMD 2210633) protein is Flagellar P-ring protein 2 (flgI2).